We begin with the raw amino-acid sequence, 373 residues long: MSSTPHDPFYSSPFGPFYRRHTPYMVQPEYRIYEMNKRLQSRTEDSDNLWWDAFATEFFEDDATLTLSFCLEDGPKRYTIGRTLIPRYFSTVFEGGVTDLYYILKHSKESYHNSSITVDCDQCAMVTQHGKPMFTKVCTEGRLILEFTFDDLMRIKTWHFTIRQYRELVPRSILAMHAQDPQVLDQLSKNITRMGLTNFTLNYLRLCVILEPMQELMSRHKTYNLSPRDCLKTCLFQKWQRMVAPPAEPTRQPTTKRRKRKNSTSSTSNSSAGNTTNSAGSKKKTPAASLSLATQVPDVMVVGEPTLMGGEFGDEDERLITRLENTQYDAANGMDDEEDFNNSPALGNNSPWNSKPPATQETKSENAPPQASQ.

2 disordered regions span residues 244–287 and 327–373; these read APPA…KTPA and QYDA…QASQ. Positions 263–280 are enriched in low complexity; the sequence is STSSTSNSSAGNTTNSAG. Residues 298-337 enclose the LIM interaction domain (LID) domain; sequence DVMVVGEPTLMGGEFGDEDERLITRLENTQYDAANGMDDE. Polar residues predominate over residues 341–373; the sequence is NNSPALGNNSPWNSKPPATQETKSENAPPQASQ.

The protein belongs to the LDB family. Interacts with LHX9. Interacts with SLK; leading to negatively regulate SLK kinase activity. Interacts with LMO4. As to quaternary structure, interacts with PITX1. Interacts with LHX3. Post-translationally, ubiquitinated by RLIM/RNF12, leading to its degradation by the proteasome. In terms of tissue distribution, expressed in multiple tissues including heart, brain, liver, kidney, testis, lung and muscle, with expression highest in the brain, trigeminal ganglia, and lung.

It localises to the nucleus. Transcription cofactor. Binds to the LIM domain of a wide variety of LIM domain-containing transcription factors. Its function is as follows. Regulates the transcriptional activity of LIM-containing proteins such as LHX3 or PITX1. The chain is LIM domain-binding protein 2 (Ldb2) from Mus musculus (Mouse).